Reading from the N-terminus, the 518-residue chain is MTHLQFDNRLRAELPGDPEEGPRRREVLAAWSAVQPTPVAAPTLLAYSADVAQRLGLRAEDLASPRFAEVFGGNALYPGMQPWAVNYGGHQFGHWAGQLGDGRAISLGEAIGVDGGRYELQLKGAGPTPYSRGADGRAVLRSSIREFLCSEAMHYLGVPTTRALSLVGTGDAVVRDMFYDGHPRREPGAIVCRVAPSFIRFGNFELPAARGDVDLLRQWVDFTLARDFPDLPGSGEDRIASWLGQVCERTAVMVAHWMRVGFVHGVMNTDNMSILGLTIDYGPYGWVDDYDPDWTPNTTDAQGRRYRFGTQPQVAYWNLGRLAQALSPLFGDAAPLQAGLDQFRDTYLACDRRDTAAKLGLAECQDEDLHLIDDLRALMREAEMDMTLTFRGLVDLSPQQPDASVLREAFYDETKRAAQAPALGAWLQRYAARCLQDGASDAVRASRMRAANPRYVLRNYLAQQAIDQAEQGDLSGVHALLEVMQRPYDDQPRRESFAAKRPDWARDRAGCSMLSCSS.

The disordered stretch occupies residues 1 to 22 (MTHLQFDNRLRAELPGDPEEGP). 8 residues coordinate ATP: glycine 100, glycine 102, arginine 103, lysine 123, aspartate 135, glycine 136, arginine 193, and arginine 200. Residue aspartate 270 is the Proton acceptor of the active site. Asparagine 271 and aspartate 280 together coordinate Mg(2+). Aspartate 280 provides a ligand contact to ATP.

Belongs to the SELO family. Mg(2+) serves as cofactor. Requires Mn(2+) as cofactor.

It carries out the reaction L-seryl-[protein] + ATP = 3-O-(5'-adenylyl)-L-seryl-[protein] + diphosphate. It catalyses the reaction L-threonyl-[protein] + ATP = 3-O-(5'-adenylyl)-L-threonyl-[protein] + diphosphate. The catalysed reaction is L-tyrosyl-[protein] + ATP = O-(5'-adenylyl)-L-tyrosyl-[protein] + diphosphate. The enzyme catalyses L-histidyl-[protein] + UTP = N(tele)-(5'-uridylyl)-L-histidyl-[protein] + diphosphate. It carries out the reaction L-seryl-[protein] + UTP = O-(5'-uridylyl)-L-seryl-[protein] + diphosphate. It catalyses the reaction L-tyrosyl-[protein] + UTP = O-(5'-uridylyl)-L-tyrosyl-[protein] + diphosphate. Nucleotidyltransferase involved in the post-translational modification of proteins. It can catalyze the addition of adenosine monophosphate (AMP) or uridine monophosphate (UMP) to a protein, resulting in modifications known as AMPylation and UMPylation. The polypeptide is Protein nucleotidyltransferase YdiU (Xanthomonas campestris pv. campestris (strain 8004)).